We begin with the raw amino-acid sequence, 1167 residues long: Phenyloxazoline synthase MbtB (1167 aa).

One can recognise a Carrier 1 domain in the interval 2–78 (EAVVTSSQTV…AWTRLVGERT (77 aa)). Position 39 is an O-(pantetheine 4'-phosphoryl)serine (serine 39). Residues 78-100 (TAESPGAATQSGDTAASAGDPDA) are disordered. The segment at 98 to 390 (PDAPFPLAPI…SSLMLDVDFT (293 aa)) is condensation/cyclization. An adenylation region spans residues 575-967 (TYAELRERVL…RIAGVEAAVA (393 aa)). Residues 1054-1130 (VPSTALERAL…ALARRLVDHE (77 aa)) enclose the Carrier 2 domain. An O-(pantetheine 4'-phosphoryl)serine modification is found at serine 1089.

The protein belongs to the ATP-dependent AMP-binding enzyme family. MbtB subfamily. Requires pantetheine 4'-phosphate as cofactor. In terms of processing, 4'-phosphopantetheine is transferred from CoA to a specific serine in each of the two carrier protein domains, leading to their activation from apo to holo forms.

It participates in siderophore biosynthesis; mycobactin biosynthesis. Functionally, involved in the initial steps of the mycobactin biosynthetic pathway. Putatively couples activated salicylic acid with serine or threonine and cyclizes this precursor to the hydroxyphenyloxazoline ring system present in this class of siderophores. This Mycobacterium sp. (strain MCS) protein is Phenyloxazoline synthase MbtB (mbtB).